Here is a 381-residue protein sequence, read N- to C-terminus: Homoserine O-succinyltransferase (381 aa).

Positions 45–360 (NAVLVCHALN…PHGHDAFLLD (316 aa)) constitute an AB hydrolase-1 domain. Catalysis depends on Ser-151, which acts as the Nucleophile. Arg-221 lines the substrate pocket. Active-site residues include Asp-321 and His-354. Asp-355 provides a ligand contact to substrate.

The protein belongs to the AB hydrolase superfamily. MetX family. As to quaternary structure, homodimer.

It localises to the cytoplasm. The catalysed reaction is L-homoserine + succinyl-CoA = O-succinyl-L-homoserine + CoA. Its pathway is amino-acid biosynthesis; L-methionine biosynthesis via de novo pathway; O-succinyl-L-homoserine from L-homoserine: step 1/1. Transfers a succinyl group from succinyl-CoA to L-homoserine, forming succinyl-L-homoserine. This is Homoserine O-succinyltransferase from Burkholderia multivorans (strain ATCC 17616 / 249).